A 1167-amino-acid polypeptide reads, in one-letter code: Rhoptry neck protein 2-like protein 2 (1167 aa).

An N-terminal signal peptide occupies residues 1–20 (MSSNLAFLSLSLAESTASLG). The Cytoplasmic segment spans residues 21 to 977 (KSLEETRTRL…WVAKRSRSRK (957 aa)). Positions 55–94 (GPGLSVEGKQTEQMSRKSAEDTRASSLSSDPDDGRAAQLA) are disordered. Residues 68-77 (MSRKSAEDTR) show a composition bias toward basic and acidic residues. Residues 978-998 (LAIVSVLSLGLIFAYTLLSAL) traverse the membrane as a helical segment. The Extracellular segment spans residues 999 to 1167 (DIAQFLTDSG…TPQRAQDGSR (169 aa)). An intrachain disulfide couples C1015 to C1026.

This sequence belongs to the apicomplexan parasites RON2 family.

The protein resides in the secreted. Its subcellular location is the host cell membrane. Its function is as follows. May play a role in host cell invasion. The chain is Rhoptry neck protein 2-like protein 2 (RON2L2) from Toxoplasma gondii (strain ATCC 50611 / Me49).